The following is a 450-amino-acid chain: Serine/threonine-protein kinase SSN3 (450 aa).

Residues 40–393 (YRIIGFISSG…AAQALQSPFF (354 aa)) enclose the Protein kinase domain. ATP-binding positions include 46-54 (ISSGTYGRV) and Lys-71. Asp-173 serves as the catalytic Proton acceptor. Disordered stretches follow at residues 307–341 (ASSH…NLEK) and 418–450 (QDDN…RQKE). Residues 310 to 326 (HHNHHSHHHPHHHHGHY) show a composition bias toward basic residues.

It belongs to the protein kinase superfamily. CMGC Ser/Thr protein kinase family. CDC2/CDKX subfamily. Component of the SRB8-11 complex, a regulatory module of the Mediator complex. Interacts with SSN8/FCC1. Requires Mg(2+) as cofactor.

It localises to the nucleus. It carries out the reaction L-seryl-[protein] + ATP = O-phospho-L-seryl-[protein] + ADP + H(+). The enzyme catalyses L-threonyl-[protein] + ATP = O-phospho-L-threonyl-[protein] + ADP + H(+). The catalysed reaction is [DNA-directed RNA polymerase] + ATP = phospho-[DNA-directed RNA polymerase] + ADP + H(+). Its function is as follows. Component of the SRB8-11 complex. The SRB8-11 complex is a regulatory module of the Mediator complex which is itself involved in regulation of basal and activated RNA polymerase II-dependent transcription. The SRB8-11 complex may be involved in the transcriptional repression of a subset of genes regulated by Mediator. It may inhibit the association of the Mediator complex with RNA polymerase II to form the holoenzyme complex. The SRB8-11 complex phosphorylates the C-terminal domain (CTD) of the largest subunit of RNA polymerase II. Required for normal growth and secondary metabolism. The chain is Serine/threonine-protein kinase SSN3 (SSN3) from Gibberella moniliformis (Maize ear and stalk rot fungus).